We begin with the raw amino-acid sequence, 789 residues long: Kin of IRRE-like protein 1 (789 aa).

The first 47 residues, 1–47 (MTLENRSTCLMTCQSSLLPKKPRFLSQKMWAPHLVVAYLIFVTLALA), serve as a signal peptide directing secretion. 3 N-linked (GlcNAc...) asparagine glycosylation sites follow: asparagine 5, asparagine 78, and asparagine 172. At 48-531 (LPGTQTRFSQ…REVLPVGIIA (484 aa)) the chain is on the extracellular side. Ig-like C2-type domains follow at residues 49–147 (PGTQ…AKLT), 152–248 (PEDT…TSIE), 255–335 (PTVT…TLVN), 340–419 (PRIV…EVPL), and 424–520 (PPII…IQLE). Residues cysteine 74 and cysteine 132 are joined by a disulfide bond. Intrachain disulfides connect cysteine 175/cysteine 232 and cysteine 276/cysteine 319. Asparagine 329 is a glycosylation site (N-linked (GlcNAc...) asparagine). A disulfide bridge links cysteine 361 with cysteine 403. Residues 437 to 439 (RGD) carry the Cell attachment site motif. A disulfide bridge connects residues cysteine 445 and cysteine 504. A glycan (N-linked (GlcNAc...) asparagine) is linked at asparagine 503. A helical transmembrane segment spans residues 532–552 (GATIGAGILLVFSFAALVFFL). Residues 553–789 (YRRRKGSRKD…RFQQRMQTHV (237 aa)) are Cytoplasmic-facing. The residue at position 606 (serine 606) is a Phosphoserine. Phosphotyrosine; by FYN occurs at positions 637 and 638. 2 positions are modified to phosphotyrosine: tyrosine 654 and tyrosine 657. Residues 687–713 (RAPASDYGTEPTPSGPSAPGGTDTTSQ) form a disordered region. Residues 694 to 712 (GTEPTPSGPSAPGGTDTTS) show a composition bias toward low complexity. The residue at position 756 (tyrosine 756) is a Phosphotyrosine.

Belongs to the immunoglobulin superfamily. In terms of assembly, interacts with TJP1/ZO-1 and with NPHS2/podocin (via the C-terminus). Interacts with NPHS1/nephrin (via the Ig-like domains); this interaction is dependent on KIRREL1 glycosylation. Homodimer (via the Ig-like domains). Interacts when tyrosine-phosphorylated with GRB2. In terms of processing, phosphorylation probably regulates the interaction with NPHS2. Phosphorylated at Tyr-637 and Tyr-638 by FYN, leading to GRB2 binding. N-glycosylated.

It is found in the cell membrane. Its function is as follows. Required for proper function of the glomerular filtration barrier. It is involved in the maintenance of a stable podocyte architecture with interdigitating foot processes connected by specialized cell-cell junctions, known as the slit diaphragm. It is a signaling protein that needs the presence of TEC kinases to fully trans-activate the transcription factor AP-1. This Rattus norvegicus (Rat) protein is Kin of IRRE-like protein 1 (Kirrel1).